Here is a 179-residue protein sequence, read N- to C-terminus: uncharacterized protein (179 aa).

Over residues 26 to 39 the composition is skewed to low complexity; the sequence is AAKLAAATTPTHTA. Positions 26-179 are disordered; the sequence is AAKLAAATTP…RPRRNTLRHM (154 aa). Over residues 150 to 165 the composition is skewed to polar residues; that stretch reads RQSVTQSTAARQTQPH. Positions 167–179 are enriched in basic residues; sequence GRPRPRRNTLRHM.

This is an uncharacterized protein from Equus caballus (Horse).